Here is a 175-residue protein sequence, read N- to C-terminus: Enhancer of mRNA-decapping protein 1 (175 aa).

Over residues 1-27 the composition is skewed to polar residues; that stretch reads MSTDTMYFNSSRLLPSAGRNKTNNLIK. Disordered regions lie at residues 1–113 and 155–175; these read MSTD…KDDT and GSTF…PSFL. An N-acetylserine modification is found at Ser-2. Positions 35–47 are enriched in low complexity; it reads ARGNAAKNANNNN. Residues 58-77 show a composition bias toward polar residues; the sequence is LPNGQKPNFGHSSNKKPSFN. Position 82 is a phosphoserine (Ser-82). The span at 100–113 shows a compositional bias: basic and acidic residues; sequence NNKETPRQNNKDDT.

This sequence belongs to the EDC family.

It is found in the cytoplasm. Functionally, mRNA-binding protein which stimulates mRNA decapping by DCP1 and DCP2. Involved in the regulation of expression of multiple genes involved in glycolysis and gluconeogenesis. The polypeptide is Enhancer of mRNA-decapping protein 1 (EDC1) (Saccharomyces cerevisiae (strain ATCC 204508 / S288c) (Baker's yeast)).